Reading from the N-terminus, the 494-residue chain is Lysine--tRNA ligase (494 aa).

Mg(2+) contacts are provided by Glu407 and Glu414.

It belongs to the class-II aminoacyl-tRNA synthetase family. As to quaternary structure, homodimer. It depends on Mg(2+) as a cofactor.

The protein resides in the cytoplasm. The catalysed reaction is tRNA(Lys) + L-lysine + ATP = L-lysyl-tRNA(Lys) + AMP + diphosphate. The chain is Lysine--tRNA ligase from Lactococcus lactis subsp. cremoris (strain MG1363).